Consider the following 360-residue polypeptide: Phospho-N-acetylmuramoyl-pentapeptide-transferase (360 aa).

Transmembrane regions (helical) follow at residues 26–46 (AILSVLTALGLSLWMGPIMIK), 70–90 (GTPTMGGIMILAAISITILLW), 94–114 (SNPYVWAVLTVLLGYGAVGFV), 132–152 (WKYFWQSLIAFVVAFALYAYG), 168–188 (VMPQLGLMYIILTYFVIVGTS), 199–219 (GLAIMPTVLVAAGFAVIAWAT), 236–256 (ASELVVVCTAIVGAGLGFLWF), 263–283 (VFMGDVGSLALGGALGTIAVL), 288–308 (LVLVIMGGVFVMETLSVILQV), and 338–358 (VIVRFWIISMVLVLIGLATLK).

The protein belongs to the glycosyltransferase 4 family. MraY subfamily. It depends on Mg(2+) as a cofactor.

The protein resides in the cell inner membrane. The catalysed reaction is UDP-N-acetyl-alpha-D-muramoyl-L-alanyl-gamma-D-glutamyl-meso-2,6-diaminopimeloyl-D-alanyl-D-alanine + di-trans,octa-cis-undecaprenyl phosphate = di-trans,octa-cis-undecaprenyl diphospho-N-acetyl-alpha-D-muramoyl-L-alanyl-D-glutamyl-meso-2,6-diaminopimeloyl-D-alanyl-D-alanine + UMP. It functions in the pathway cell wall biogenesis; peptidoglycan biosynthesis. Functionally, catalyzes the initial step of the lipid cycle reactions in the biosynthesis of the cell wall peptidoglycan: transfers peptidoglycan precursor phospho-MurNAc-pentapeptide from UDP-MurNAc-pentapeptide onto the lipid carrier undecaprenyl phosphate, yielding undecaprenyl-pyrophosphoryl-MurNAc-pentapeptide, known as lipid I. The polypeptide is Phospho-N-acetylmuramoyl-pentapeptide-transferase (Vibrio parahaemolyticus serotype O3:K6 (strain RIMD 2210633)).